We begin with the raw amino-acid sequence, 200 residues long: Probable E3 ubiquitin-protein ligase ATL45 (200 aa).

A helical membrane pass occupies residues 26-46 (MVVILSALLCALVCVAGLAAV). The RING-type; atypical zinc-finger motif lies at 113-155 (CAICITEFSEGEEIRILPLCSHAFHVACIDKWLTSRSSCPSCR).

This sequence belongs to the RING-type zinc finger family. ATL subfamily. As to quaternary structure, interacts with BIK1.

It is found in the membrane. The enzyme catalyses S-ubiquitinyl-[E2 ubiquitin-conjugating enzyme]-L-cysteine + [acceptor protein]-L-lysine = [E2 ubiquitin-conjugating enzyme]-L-cysteine + N(6)-ubiquitinyl-[acceptor protein]-L-lysine.. Its pathway is protein modification; protein ubiquitination. In terms of biological role, E3 ubiquitin-protein ligase that possess E3 ubiquitin ligase activity in vitro and mediates protein monoubiquitination. Triggers the monoubiquitination of phosphorylated BIK1 in response to pathogen-associated molecular pattern (PAMP) detection. May be involved in the early steps of the plant defense signaling pathway. In Arabidopsis thaliana (Mouse-ear cress), this protein is Probable E3 ubiquitin-protein ligase ATL45.